Here is a 142-residue protein sequence, read N- to C-terminus: uncharacterized protein (142 aa).

A run of 2 helical transmembrane segments spans residues 12 to 29 (NAIL…YGLL) and 44 to 66 (IYGQ…GVTA).

Its subcellular location is the cell membrane. This is an uncharacterized protein from Archaeoglobus fulgidus (strain ATCC 49558 / DSM 4304 / JCM 9628 / NBRC 100126 / VC-16).